A 251-amino-acid chain; its full sequence is MDPKIKIRGVNFFYHKHQVLKNINMDFPERQITAIIGPSGCGKSTLLRALNRMNDIVSGARLEGAVLLDNENIYSPNLDVVNLRKRVGMVFQQPNPFPKSIFDNVAFGPRMLGTTVQSRLDEVVEKSLRQAALWDEVKDNLHKSGLALSGGQQQRLCIARVLAIEPEVILMDEPCSALDPVSTMRIEELMQELKQNYTIAIVTHNMQQAARASDWTGFLLTGDLVEYGRTGEIFSRPRDKRTEDYITGRFG.

In terms of domain architecture, ABC transporter spans 5 to 246 (IKIRGVNFFY…PRDKRTEDYI (242 aa)). ATP is bound at residue 37-44 (GPSGCGKS).

It belongs to the ABC transporter superfamily. Phosphate importer (TC 3.A.1.7) family. The complex is composed of two ATP-binding proteins (PstB), two transmembrane proteins (PstC and PstA) and a solute-binding protein (PstS).

It is found in the cell membrane. The catalysed reaction is phosphate(out) + ATP + H2O = ADP + 2 phosphate(in) + H(+). In terms of biological role, part of the ABC transporter complex PstSACB involved in phosphate import. Responsible for energy coupling to the transport system. This Dehalococcoides mccartyi (strain CBDB1) protein is Phosphate import ATP-binding protein PstB.